Reading from the N-terminus, the 521-residue chain is DEAD-box ATP-dependent RNA helicase 12 (521 aa).

Positions 1 to 97 (MHHPRARYPP…QQWLRRDQAT (97 aa)) are disordered. Residues 13–50 (TSGGGGGGGGGGGGGRGNGGGGFGGGGGGGGGNHGYYG) show a composition bias toward gly residues. A compositionally biased stretch (low complexity) spans 51 to 89 (RGPQPQPQQQHYHHQAQQLHQHQQQQQHAQRNSSSQQQQ). The short motif at 147–175 (NEFEDYFLKRELLMGIYEKGFERPSPIQE) is the Q motif element. Positions 178–348 (IPIALTGSDI…EKYLPRPYVI (171 aa)) constitute a Helicase ATP-binding domain. 191 to 198 (AKNGTGKT) provides a ligand contact to ATP. The DEAD box motif lies at 296 to 299 (DEAD). One can recognise a Helicase C-terminal domain in the interval 358-518 (GITQYYAFVE…TIPPQIDLAV (161 aa)).

It belongs to the DEAD box helicase family. DDX6/DHH1 subfamily.

It localises to the cytoplasm. It is found in the P-body. It carries out the reaction ATP + H2O = ADP + phosphate + H(+). In terms of biological role, ATP-dependent RNA helicase involved in mRNA turnover, and more specifically in mRNA decapping. In Oryza sativa subsp. japonica (Rice), this protein is DEAD-box ATP-dependent RNA helicase 12.